The primary structure comprises 245 residues: MAFKFVIFAAVVAVARAGLIASPAVSYAAAPALVAAPVAKVAYAAAPIAKVAYAAQPEEYDANPHYSFSYGISDALTGDSKSQQESRSGDVVQGSYSVVDPDGTKRTVDYTADPHNGFNAVVRREPLAAKTIVAAAPVATKVIAQPAVAYAAPVAKTISYAAPVATKTYVAQPALSYAAPLTKTYVSQPALSYAAPVAKTISYSAPLATKTYVSQPAISYAAPLAKTYVSQPALSYAAPAYAYHH.

Residues 25-86 (VSYAAAPALV…TGDSKSQQES (62 aa)) form the Chitin-binding type R&amp;R domain. The disordered stretch occupies residues 79-100 (DSKSQQESRSGDVVQGSYSVVD). A run of 3 repeats spans residues 92–95 (VQGS), 108–111 (VDYT), and 118–121 (FNAV).

Functionally, component of the cuticle of African malaria mosquito. This chain is Cuticle protein (Ccp84Ab), found in Anopheles gambiae (African malaria mosquito).